The sequence spans 460 residues: UDP-N-acetylmuramoylalanine--D-glutamate ligase (460 aa).

122–128 contributes to the ATP binding site; it reads GSNGKST.

Belongs to the MurCDEF family.

It localises to the cytoplasm. The catalysed reaction is UDP-N-acetyl-alpha-D-muramoyl-L-alanine + D-glutamate + ATP = UDP-N-acetyl-alpha-D-muramoyl-L-alanyl-D-glutamate + ADP + phosphate + H(+). It functions in the pathway cell wall biogenesis; peptidoglycan biosynthesis. Its function is as follows. Cell wall formation. Catalyzes the addition of glutamate to the nucleotide precursor UDP-N-acetylmuramoyl-L-alanine (UMA). This chain is UDP-N-acetylmuramoylalanine--D-glutamate ligase, found in Jannaschia sp. (strain CCS1).